Reading from the N-terminus, the 299-residue chain is ATP synthase gamma chain (299 aa).

Belongs to the ATPase gamma chain family. F-type ATPases have 2 components, CF(1) - the catalytic core - and CF(0) - the membrane proton channel. CF(1) has five subunits: alpha(3), beta(3), gamma(1), delta(1), epsilon(1). CF(0) has three main subunits: a, b and c.

Its subcellular location is the cell membrane. In terms of biological role, produces ATP from ADP in the presence of a proton gradient across the membrane. The gamma chain is believed to be important in regulating ATPase activity and the flow of protons through the CF(0) complex. The sequence is that of ATP synthase gamma chain from Levilactobacillus brevis (strain ATCC 367 / BCRC 12310 / CIP 105137 / JCM 1170 / LMG 11437 / NCIMB 947 / NCTC 947) (Lactobacillus brevis).